Reading from the N-terminus, the 494-residue chain is Ribose import ATP-binding protein RbsA (494 aa).

2 consecutive ABC transporter domains span residues 3 to 240 (IEMK…VGRS) and 250 to 494 (SQIS…TGGE). An ATP-binding site is contributed by 35-42 (GENGAGKS).

Belongs to the ABC transporter superfamily. Ribose importer (TC 3.A.1.2.1) family. In terms of assembly, the complex is composed of an ATP-binding protein (RbsA), two transmembrane proteins (RbsC) and a solute-binding protein (RbsB).

Its subcellular location is the cell membrane. The enzyme catalyses D-ribose(out) + ATP + H2O = D-ribose(in) + ADP + phosphate + H(+). Functionally, part of the ABC transporter complex RbsABC involved in ribose import. Responsible for energy coupling to the transport system. This Bacillus cereus (strain ZK / E33L) protein is Ribose import ATP-binding protein RbsA.